Reading from the N-terminus, the 430-residue chain is Adenylosuccinate synthetase (430 aa).

GTP-binding positions include 11–17 and 39–41; these read GDEGKGK and GHS. Asp12 functions as the Proton acceptor in the catalytic mechanism. 2 residues coordinate Mg(2+): Asp12 and Gly39. Residues 12 to 15, 37 to 40, Thr129, Arg143, Asn221, Thr236, and Arg300 each bind IMP; these read DEGK and NAGH. The active-site Proton donor is the His40. 296–302 serves as a coordination point for substrate; it reads VSTGRKR. GTP is bound by residues Arg302, 328–330, and 412–414; these read KLD and GTG.

Belongs to the adenylosuccinate synthetase family. In terms of assembly, homodimer. Requires Mg(2+) as cofactor.

The protein localises to the cytoplasm. It catalyses the reaction IMP + L-aspartate + GTP = N(6)-(1,2-dicarboxyethyl)-AMP + GDP + phosphate + 2 H(+). Its pathway is purine metabolism; AMP biosynthesis via de novo pathway; AMP from IMP: step 1/2. Its function is as follows. Plays an important role in the de novo pathway and in the salvage pathway of purine nucleotide biosynthesis. Catalyzes the first committed step in the biosynthesis of AMP from IMP. This Neurospora crassa (strain ATCC 24698 / 74-OR23-1A / CBS 708.71 / DSM 1257 / FGSC 987) protein is Adenylosuccinate synthetase.